A 338-amino-acid chain; its full sequence is Alanine racemase (338 aa).

Lys33 acts as the Proton acceptor; specific for D-alanine in catalysis. The residue at position 33 (Lys33) is an N6-(pyridoxal phosphate)lysine. Arg126 serves as a coordination point for substrate. Tyr236 serves as the catalytic Proton acceptor; specific for L-alanine. Met284 is a substrate binding site.

The protein belongs to the alanine racemase family. The cofactor is pyridoxal 5'-phosphate.

The enzyme catalyses L-alanine = D-alanine. It functions in the pathway amino-acid biosynthesis; D-alanine biosynthesis; D-alanine from L-alanine: step 1/1. Functionally, catalyzes the interconversion of L-alanine and D-alanine. May also act on other amino acids. This is Alanine racemase (alr) from Aquifex aeolicus (strain VF5).